A 250-amino-acid chain; its full sequence is ATP synthase subunit a (250 aa).

The next 6 membrane-spanning stretches (helical) occupy residues 29–49 (ASLF…FATS), 84–104 (FFPL…LGMF), 114–134 (IIVT…YGFY), 143–163 (VFVP…IEII), 193–213 (FVAS…LPLI), and 216–236 (VALT…FAVL).

Belongs to the ATPase A chain family. F-type ATPases have 2 components, CF(1) - the catalytic core - and CF(0) - the membrane proton channel. CF(1) has five subunits: alpha(3), beta(3), gamma(1), delta(1), epsilon(1). CF(0) has three main subunits: a(1), b(2) and c(9-12). The alpha and beta chains form an alternating ring which encloses part of the gamma chain. CF(1) is attached to CF(0) by a central stalk formed by the gamma and epsilon chains, while a peripheral stalk is formed by the delta and b chains.

Its subcellular location is the cell inner membrane. Its function is as follows. Key component of the proton channel; it plays a direct role in the translocation of protons across the membrane. In Rhizobium johnstonii (strain DSM 114642 / LMG 32736 / 3841) (Rhizobium leguminosarum bv. viciae), this protein is ATP synthase subunit a.